A 238-amino-acid polypeptide reads, in one-letter code: Ribosomal RNA small subunit methyltransferase G (238 aa).

Residues G78, 129–130 (AE), and R148 each bind S-adenosyl-L-methionine.

It belongs to the methyltransferase superfamily. RNA methyltransferase RsmG family.

It is found in the cytoplasm. In terms of biological role, specifically methylates the N7 position of a guanine in 16S rRNA. This chain is Ribosomal RNA small subunit methyltransferase G, found in Caldicellulosiruptor bescii (strain ATCC BAA-1888 / DSM 6725 / KCTC 15123 / Z-1320) (Anaerocellum thermophilum).